A 117-amino-acid polypeptide reads, in one-letter code: Ribonuclease P protein component (117 aa).

The protein belongs to the RnpA family. As to quaternary structure, consists of a catalytic RNA component (M1 or rnpB) and a protein subunit.

It carries out the reaction Endonucleolytic cleavage of RNA, removing 5'-extranucleotides from tRNA precursor.. Functionally, RNaseP catalyzes the removal of the 5'-leader sequence from pre-tRNA to produce the mature 5'-terminus. It can also cleave other RNA substrates such as 4.5S RNA. The protein component plays an auxiliary but essential role in vivo by binding to the 5'-leader sequence and broadening the substrate specificity of the ribozyme. This chain is Ribonuclease P protein component, found in Thermotoga sp. (strain RQ2).